Consider the following 579-residue polypeptide: V-type ATP synthase alpha chain (579 aa).

227–234 contributes to the ATP binding site; the sequence is GGFGTGKT.

The protein belongs to the ATPase alpha/beta chains family.

It catalyses the reaction ATP + H2O + 4 H(+)(in) = ADP + phosphate + 5 H(+)(out). Functionally, produces ATP from ADP in the presence of a proton gradient across the membrane. The V-type alpha chain is a catalytic subunit. This chain is V-type ATP synthase alpha chain, found in Anaeromyxobacter dehalogenans (strain 2CP-1 / ATCC BAA-258).